We begin with the raw amino-acid sequence, 72 residues long: Large ribosomal subunit protein uL29 (72 aa).

The protein belongs to the universal ribosomal protein uL29 family.

This chain is Large ribosomal subunit protein uL29, found in Thermodesulfovibrio yellowstonii (strain ATCC 51303 / DSM 11347 / YP87).